Consider the following 923-residue polypeptide: Alanine--tRNA ligase (923 aa).

Zn(2+)-binding residues include His614, His618, Cys717, and His721. The segment at 884–903 (KVGGGGGGPPDFAQGGGPDA) is disordered. Residues 885 to 901 (VGGGGGGPPDFAQGGGP) show a composition bias toward gly residues.

The protein belongs to the class-II aminoacyl-tRNA synthetase family. The cofactor is Zn(2+).

It localises to the cytoplasm. It catalyses the reaction tRNA(Ala) + L-alanine + ATP = L-alanyl-tRNA(Ala) + AMP + diphosphate. Its function is as follows. Catalyzes the attachment of alanine to tRNA(Ala) in a two-step reaction: alanine is first activated by ATP to form Ala-AMP and then transferred to the acceptor end of tRNA(Ala). Also edits incorrectly charged Ser-tRNA(Ala) and Gly-tRNA(Ala) via its editing domain. This Haloquadratum walsbyi (strain DSM 16790 / HBSQ001) protein is Alanine--tRNA ligase.